A 391-amino-acid chain; its full sequence is Methylthioribose-1-phosphate isomerase (391 aa).

D267 (proton donor) is an active-site residue.

It belongs to the eIF-2B alpha/beta/delta subunits family. MtnA subfamily.

Its subcellular location is the cytoplasm. The protein localises to the nucleus. It carries out the reaction 5-(methylsulfanyl)-alpha-D-ribose 1-phosphate = 5-(methylsulfanyl)-D-ribulose 1-phosphate. Its pathway is amino-acid biosynthesis; L-methionine biosynthesis via salvage pathway; L-methionine from S-methyl-5-thio-alpha-D-ribose 1-phosphate: step 1/6. Catalyzes the interconversion of methylthioribose-1-phosphate (MTR-1-P) into methylthioribulose-1-phosphate (MTRu-1-P). The protein is Methylthioribose-1-phosphate isomerase of Ajellomyces capsulatus (strain NAm1 / WU24) (Darling's disease fungus).